The sequence spans 336 residues: L-Ala-D/L-amino acid epimerase (336 aa).

Residues threonine 130 and lysine 152–lysine 154 each bind substrate. Mg(2+) contacts are provided by aspartate 178, glutamate 204, and aspartate 229. Substrate is bound by residues lysine 251 and aspartate 301–aspartate 303.

The protein belongs to the mandelate racemase/muconate lactonizing enzyme family. Mg(2+) is required as a cofactor.

Functionally, catalyzes the epimerization of D-Ala-D-Ala to D-Ala-L-Ala. Has broad substrate specificity and catalyzes the epimerization of a variety of dipeptides containing an N-terminal Ala followed by Ser, Thr, Val, Met, His, Phe or Trp (in vitro). This is L-Ala-D/L-amino acid epimerase from Flavobacterium johnsoniae (strain ATCC 17061 / DSM 2064 / JCM 8514 / BCRC 14874 / CCUG 350202 / NBRC 14942 / NCIMB 11054 / UW101) (Cytophaga johnsonae).